Consider the following 503-residue polypeptide: GTPase Obg (503 aa).

Positions 2-159 (PQFVDRVVLH…KDVILELKSM (158 aa)) constitute an Obg domain. Residues 160–340 (ADVGLVGFPS…LKYALMDIVK (181 aa)) enclose the OBG-type G domain. GTP is bound by residues 166–173 (GFPSAGKS), 191–195 (FTTLV), 212–215 (DVPG), 292–295 (NKMD), and 321–323 (STV). Mg(2+) contacts are provided by S173 and T193. The OCT domain maps to 371–444 (EFEVEADPSA…IGEITFEWDP (74 aa)). Over residues 457 to 476 (RGTDVRLEQNTRATPEERKR) the composition is skewed to basic and acidic residues. The interval 457–503 (RGTDVRLEQNTRATPEERKRASQARRGLIDENDFGDGEVAERERWQG) is disordered.

Belongs to the TRAFAC class OBG-HflX-like GTPase superfamily. OBG GTPase family. Monomer. Mg(2+) is required as a cofactor.

The protein localises to the cytoplasm. An essential GTPase which binds GTP, GDP and possibly (p)ppGpp with moderate affinity, with high nucleotide exchange rates and a fairly low GTP hydrolysis rate. Plays a role in control of the cell cycle, stress response, ribosome biogenesis and in those bacteria that undergo differentiation, in morphogenesis control. This is GTPase Obg from Corynebacterium jeikeium (strain K411).